The following is a 222-amino-acid chain: Ras-related protein Rab11C (222 aa).

22–29 (GDSAVGKT) contacts GTP. Residues 44–52 (SKATIGVEF) carry the Effector region motif. Residues 70–74 (DTAGQ) and 128–131 (NKTD) contribute to the GTP site. Residues Cys219 and Cys220 are each lipidated (S-geranylgeranyl cysteine).

This sequence belongs to the small GTPase superfamily. Rab family.

The protein localises to the cell membrane. In Nicotiana tabacum (Common tobacco), this protein is Ras-related protein Rab11C (RAB11C).